Consider the following 685-residue polypeptide: Bifunctional diguanylate cyclase/cyclic di-GMP phosphodiesterase MucR (685 aa).

The MHYT domain occupies 6–199 (YNQVLVAFSL…YTGMAAAQFP (194 aa)). Transmembrane regions (helical) follow at residues 9 to 29 (VLVA…LDMA), 44 to 64 (LIGG…VGML), 77 to 97 (GLTL…LWLV), 117 to 137 (GIAA…GIVY), 141 to 161 (WLGL…WIAF), 175 to 195 (AGAA…GMAA), and 214 to 234 (GWLA…ALIV). Over 235 to 685 (SVLDSRLEAR…PAEQLLASVA (451 aa)) the chain is Cytoplasmic. A GGDEF domain is found at 293 to 425 (RRFAVLFMDL…GRNGYCFFES (133 aa)). Residues 434–685 (QLQLLHDLRQ…PAEQLLASVA (252 aa)) enclose the EAL domain. 3',3'-c-di-GMP-binding residues include Q455, E469, L472, R473, N528, and Q533. Position 469 (E469) interacts with Mg(2+). A Mg(2+)-binding site is contributed by N528. E560, D590, and D591 together coordinate Mg(2+). D590 provides a ligand contact to 3',3'-c-di-GMP. R614 is a binding site for 3',3'-c-di-GMP. Residue E647 coordinates Mg(2+). Positions 650 and 669 each coordinate 3',3'-c-di-GMP.

In terms of assembly, homodimer. Mg(2+) serves as cofactor.

It localises to the cell inner membrane. It catalyses the reaction 2 GTP = 3',3'-c-di-GMP + 2 diphosphate. The enzyme catalyses 3',3'-c-di-GMP + H2O = 5'-phosphoguanylyl(3'-&gt;5')guanosine + H(+). Functionally, displays both diguanylate cyclase (DGC) and c-di-GMP-specific phosphodiesterase (PDE) activity. Probably modulates DGC and PDE activities, and thus c-di-GMP levels, in a growth mode-dependent manner. May act as a PDE under planktonic growth conditions and as a DGC in biofilms. During biofilm formation, it specifically activates alginate biosynthesis via generation of a localized c-di-GMP pool in the vicinity of the alginate biosynthesis protein Alg44. This Pseudomonas aeruginosa (strain ATCC 15692 / DSM 22644 / CIP 104116 / JCM 14847 / LMG 12228 / 1C / PRS 101 / PAO1) protein is Bifunctional diguanylate cyclase/cyclic di-GMP phosphodiesterase MucR.